Reading from the N-terminus, the 483-residue chain is Rhamnulokinase (483 aa).

Residue 11–15 (ASSGR) coordinates ATP. Substrate-binding positions include G79 and 234-236 (HDT). D235 serves as the catalytic Proton acceptor. Residue T257 participates in ATP binding. N294 provides a ligand contact to substrate. Q302 lines the ATP pocket. C352 and C369 form a disulfide bridge. G401 is an ATP binding site.

It belongs to the rhamnulokinase family. It depends on Mg(2+) as a cofactor.

It carries out the reaction L-rhamnulose + ATP = L-rhamnulose 1-phosphate + ADP + H(+). It participates in carbohydrate degradation; L-rhamnose degradation; glycerone phosphate from L-rhamnose: step 2/3. Involved in the catabolism of L-rhamnose (6-deoxy-L-mannose). Catalyzes the transfer of the gamma-phosphate group from ATP to the 1-hydroxyl group of L-rhamnulose to yield L-rhamnulose 1-phosphate. The chain is Rhamnulokinase from Listeria monocytogenes serotype 4b (strain F2365).